Consider the following 1171-residue polypeptide: APC-related protein 1 (1171 aa).

Residues 1-54 are disordered; sequence MSSSSSDENETTIHSSSNPGSSGIYSQLKAGSSKRPSVRHDVSDAEDDEEPYEG. The required for interaction with bar-1 and hmp-2 stretch occupies residues 1–481; sequence MSSSSSDENE…LSLRATRASP (481 aa). Low complexity predominate over residues 15-26; it reads SSSNPGSSGIYS. The stretch at 312–356 is one ARM repeat; that stretch reads NCLKVLANILSPDARFTTLVDSASGILKYVSQYLATNSSHLELRS. Disordered regions lie at residues 587-617, 662-699, 720-741, 767-822, 837-936, and 995-1030; these read PVDDDLDIPTSTVMGTRSNSERSLGSMNPGS, HPEDNQMTTPPNHPSTQNTTHYSSGSANTMTRSDGTTV, RKTSEDLESPDDILPGPSLEVE, EEMP…EMTT, PRSR…TMRI, and SSGSGSSLQKAETTAGSRDSGALATSTPIGSVSSLP. Positions 591-1171 are required for interaction with pry-1; it reads DLDIPTSTVM…NPKQMLVTIV (581 aa). 2 stretches are compositionally biased toward polar residues: residues 595–617 and 666–697; these read PTSTVMGTRSNSERSLGSMNPGS and NQMTTPPNHPSTQNTTHYSSGSANTMTRSDGT. Residues 788–799 are compositionally biased toward polar residues; the sequence is FSPSQKTTSSPA. Positions 857-874 are enriched in basic and acidic residues; it reads EPDRSSHSKNEEADRRDA. 2 stretches are compositionally biased toward polar residues: residues 890 to 913 and 1002 to 1028; these read RGSSPQQQQLHRMESLESQASSED and LQKAETTAGSRDSGALATSTPIGSVSS.

Belongs to the adenomatous polyposis coli (APC) family. As to quaternary structure, interacts (via N-terminus) with bar-1 and hmp-2; the interaction with hmp-2 is relatively weak. Interacts (via C-terminus) with pry-1 (via N-terminus). Probably associates with bar-1, gsk-3, pry-1 in a complex.

Its subcellular location is the cell junction. The protein resides in the adherens junction. It localises to the cytoplasm. The protein localises to the nucleus. In terms of biological role, has a role in endoderm cell specification and pharyngeal development. Required for the migration of epithelial cells, organization of the anterior seam cells and ceh-13 expression during embryo morphogenesis. Prevents hyperactivation of the Wnt signaling pathway during endoderm development, probably by preventing hmp-2 nuclear translocation. During larval development, apr-1 is required for expression of lin-39 in P3-8.p. Shown to negatively regulate Wnt signaling in vulval precursor cells. Has a role in cell division by establishing the polarity of the mother cell which forms the asymmetries of the daughter nuclei. Thought to regulate export of wrm-1 from the nucleus possibly as part of a complex involving pry-1. In Caenorhabditis briggsae, this protein is APC-related protein 1.